The following is a 179-amino-acid chain: Inner membrane-spanning protein YciB (179 aa).

The next 5 membrane-spanning stretches (helical) occupy residues 22 to 42 (IYAA…YTWI), 50 to 70 (MALI…FFHN), 76 to 96 (WKVT…QWVM), 121 to 141 (IAWA…AFWM), and 149 to 169 (FKVF…GVYI).

Belongs to the YciB family.

It is found in the cell inner membrane. Its function is as follows. Plays a role in cell envelope biogenesis, maintenance of cell envelope integrity and membrane homeostasis. The chain is Inner membrane-spanning protein YciB from Enterobacter sp. (strain 638).